Consider the following 706-residue polypeptide: Polyribonucleotide nucleotidyltransferase (706 aa).

Residues aspartate 485 and aspartate 491 each contribute to the Mg(2+) site. A KH domain is found at 552–611 (PRMLKMKIHPDKIREVIGSGGKTINKIIEDTGVKIDIENDGTIFIAAQTQEAGELALSII). The 69-residue stretch at 621–689 (GDIFKGKVIK…QQGKVSLSRK (69 aa)) folds into the S1 motif domain.

This sequence belongs to the polyribonucleotide nucleotidyltransferase family. Mg(2+) is required as a cofactor.

Its subcellular location is the cytoplasm. It carries out the reaction RNA(n+1) + phosphate = RNA(n) + a ribonucleoside 5'-diphosphate. Its function is as follows. Involved in mRNA degradation. Catalyzes the phosphorolysis of single-stranded polyribonucleotides processively in the 3'- to 5'-direction. The protein is Polyribonucleotide nucleotidyltransferase of Alkaliphilus oremlandii (strain OhILAs) (Clostridium oremlandii (strain OhILAs)).